A 269-amino-acid polypeptide reads, in one-letter code: Alcohol dehydrogenase-related 31 kDa protein (269 aa).

NAD(+) is bound at residue 11–34 (YVADCGGIALETCKVLMTKNIAKL). Ser139 contacts substrate. Tyr152 acts as the Proton acceptor in catalysis.

It belongs to the short-chain dehydrogenases/reductases (SDR) family.

The polypeptide is Alcohol dehydrogenase-related 31 kDa protein (Adhr) (Drosophila lebanonensis (Fruit fly)).